The sequence spans 374 residues: tRNA-specific 2-thiouridylase MnmA (374 aa).

ATP-binding positions include 15-22 (GMSGGVDS) and Met-41. Residues 101 to 103 (NPD) are interaction with target base in tRNA. Cys-106 serves as the catalytic Nucleophile. A disulfide bridge links Cys-106 with Cys-206. Gly-130 provides a ligand contact to ATP. The interaction with tRNA stretch occupies residues 156–158 (KDQ). Cys-206 acts as the Cysteine persulfide intermediate in catalysis. The interval 324–325 (RY) is interaction with tRNA.

It belongs to the MnmA/TRMU family.

It is found in the cytoplasm. It catalyses the reaction S-sulfanyl-L-cysteinyl-[protein] + uridine(34) in tRNA + AH2 + ATP = 2-thiouridine(34) in tRNA + L-cysteinyl-[protein] + A + AMP + diphosphate + H(+). Functionally, catalyzes the 2-thiolation of uridine at the wobble position (U34) of tRNA, leading to the formation of s(2)U34. This chain is tRNA-specific 2-thiouridylase MnmA, found in Aromatoleum aromaticum (strain DSM 19018 / LMG 30748 / EbN1) (Azoarcus sp. (strain EbN1)).